The primary structure comprises 61 residues: Adipokinetic prohormone type 2 (61 aa).

Residues 1–22 form the signal peptide; sequence MTQSCTLTLVLVVAVLAALATA. Glutamine 23 carries the post-translational modification Pyrrolidone carboxylic acid. Residue tryptophan 30 is modified to Tryptophan amide.

It belongs to the AKH/HRTH/RPCH family. Adipokinetic hormone precursor-related peptide (APRP) can form three type of disulfide-bond dimers: p1 (alpha-alpha), p2 (alpha-beta), and p3 (beta-beta).

Its subcellular location is the secreted. Its function is as follows. This hormone, released from cells in the corpora cardiaca, causes release of diglycerides from the fat body and stimulation of muscles to use these diglycerides as an energy source during energy-demanding processes. In Locusta migratoria (Migratory locust), this protein is Adipokinetic prohormone type 2.